Here is a 242-residue protein sequence, read N- to C-terminus: Ethanolamine ammonia-lyase small subunit (242 aa).

Residues valine 155 and glutamate 176 each coordinate adenosylcob(III)alamin.

This sequence belongs to the EutC family. In terms of assembly, the basic unit is a heterodimer which dimerizes to form tetramers. The heterotetramers trimerize; 6 large subunits form a core ring with 6 small subunits projecting outwards. The cofactor is adenosylcob(III)alamin.

Its subcellular location is the bacterial microcompartment. It catalyses the reaction ethanolamine = acetaldehyde + NH4(+). The protein operates within amine and polyamine degradation; ethanolamine degradation. Functionally, catalyzes the deamination of various vicinal amino-alcohols to oxo compounds. Allows this organism to utilize ethanolamine as the sole source of nitrogen and carbon in the presence of external vitamin B12. This Clostridium acetobutylicum (strain ATCC 824 / DSM 792 / JCM 1419 / IAM 19013 / LMG 5710 / NBRC 13948 / NRRL B-527 / VKM B-1787 / 2291 / W) protein is Ethanolamine ammonia-lyase small subunit.